The following is a 518-amino-acid chain: Probable cytosol aminopeptidase (518 aa).

2 residues coordinate Mn(2+): Lys270 and Asp275. Residue Lys282 is part of the active site. Residues Asp293, Asp352, and Glu354 each coordinate Mn(2+). The active site involves Arg356. Residues 495–507 (SRTTRQPGSTGET) show a composition bias toward polar residues. The interval 495-518 (SRTTRQPGSTGETGSRKNRRKSKE) is disordered.

It belongs to the peptidase M17 family. Requires Mn(2+) as cofactor.

Its subcellular location is the cytoplasm. It carries out the reaction Release of an N-terminal amino acid, Xaa-|-Yaa-, in which Xaa is preferably Leu, but may be other amino acids including Pro although not Arg or Lys, and Yaa may be Pro. Amino acid amides and methyl esters are also readily hydrolyzed, but rates on arylamides are exceedingly low.. It catalyses the reaction Release of an N-terminal amino acid, preferentially leucine, but not glutamic or aspartic acids.. Its function is as follows. Presumably involved in the processing and regular turnover of intracellular proteins. Catalyzes the removal of unsubstituted N-terminal amino acids from various peptides. This chain is Probable cytosol aminopeptidase, found in Nitrosospira multiformis (strain ATCC 25196 / NCIMB 11849 / C 71).